Reading from the N-terminus, the 245-residue chain is Eukaryotic translation initiation factor 3 subunit K (245 aa).

The PCI domain maps to 46-227; that stretch reads YDCYANLALL…EAKGTVVREN (182 aa).

Belongs to the eIF-3 subunit K family. Component of the eukaryotic translation initiation factor 3 (eIF-3) complex.

Its subcellular location is the cytoplasm. Component of the eukaryotic translation initiation factor 3 (eIF-3) complex, which is involved in protein synthesis of a specialized repertoire of mRNAs and, together with other initiation factors, stimulates binding of mRNA and methionyl-tRNAi to the 40S ribosome. The eIF-3 complex specifically targets and initiates translation of a subset of mRNAs involved in cell proliferation. The polypeptide is Eukaryotic translation initiation factor 3 subunit K (Phaeosphaeria nodorum (strain SN15 / ATCC MYA-4574 / FGSC 10173) (Glume blotch fungus)).